The sequence spans 279 residues: Ribosomal RNA small subunit methyltransferase A (279 aa).

Residues His-12, Leu-14, Gly-39, Glu-60, Asp-81, and Asn-118 each contribute to the S-adenosyl-L-methionine site.

Belongs to the class I-like SAM-binding methyltransferase superfamily. rRNA adenine N(6)-methyltransferase family. RsmA subfamily.

It is found in the cytoplasm. It carries out the reaction adenosine(1518)/adenosine(1519) in 16S rRNA + 4 S-adenosyl-L-methionine = N(6)-dimethyladenosine(1518)/N(6)-dimethyladenosine(1519) in 16S rRNA + 4 S-adenosyl-L-homocysteine + 4 H(+). In terms of biological role, specifically dimethylates two adjacent adenosines (A1518 and A1519) in the loop of a conserved hairpin near the 3'-end of 16S rRNA in the 30S particle. May play a critical role in biogenesis of 30S subunits. The sequence is that of Ribosomal RNA small subunit methyltransferase A from Polaromonas naphthalenivorans (strain CJ2).